The primary structure comprises 176 residues: MAMSFEWPWQYRFPPFFTLQPNVDTRQKQLAAWCSLVLSFCRLHKQSSMTVMEAQESPLFNNVKLQRKLPVESIQIVLEELRKKGNLEWLDKNKSSFLIMWRRPEEWGKLIYQWVSRSGQNNSVFTLYELTSGEDTEDEEFHGLDEATLLRALQALQQEHKAEIITVSDGRGVKFF.

Belongs to the VPS25 family. As to quaternary structure, component of a complex at least composed of ELL, SNF8/EAP30, VPS25/EAP20 and VPS36/EAP45. Component of the endosomal sorting complex required for transport II (ESCRT-II), composed of SNF8, VPS36 and 2 copies of VPS25. Interacts with CFTR; the interaction requires misfolded CFTR. Interacts (via C-terminal half) with the ESCRT-III subunit CHMP6 (via N-terminal half).

The protein resides in the cytoplasm. Its subcellular location is the endosome membrane. The protein localises to the nucleus. In terms of biological role, component of the ESCRT-II complex (endosomal sorting complex required for transport II), which is required for multivesicular body (MVB) formation and sorting of endosomal cargo proteins into MVBs. The MVB pathway mediates delivery of transmembrane proteins into the lumen of the lysosome for degradation. The ESCRT-II complex is probably involved in the recruitment of the ESCRT-III complex. The ESCRT-II complex may also play a role in transcription regulation, possibly via its interaction with ELL. This is Vacuolar protein-sorting-associated protein 25 (Vps25) from Mus musculus (Mouse).